We begin with the raw amino-acid sequence, 112 residues long: Large ribosomal subunit protein uL22 (112 aa).

The protein belongs to the universal ribosomal protein uL22 family. In terms of assembly, part of the 50S ribosomal subunit.

This protein binds specifically to 23S rRNA; its binding is stimulated by other ribosomal proteins, e.g. L4, L17, and L20. It is important during the early stages of 50S assembly. It makes multiple contacts with different domains of the 23S rRNA in the assembled 50S subunit and ribosome. In terms of biological role, the globular domain of the protein is located near the polypeptide exit tunnel on the outside of the subunit, while an extended beta-hairpin is found that lines the wall of the exit tunnel in the center of the 70S ribosome. The polypeptide is Large ribosomal subunit protein uL22 (Sulfurovum sp. (strain NBC37-1)).